Consider the following 1118-residue polypeptide: Repetin (1118 aa).

The segment at 1–91 (MPQLLNSILN…VQACHHKLDS (91 aa)) is S-100-like. EF-hand domains are found at residues 13–48 (KVFQDYAEYHGVGASLSKKELKQLLLTEFGDILRRP) and 49–84 (NDPETVETILEHLDRDRNGYVDFHEYLLLVFQLVQA). Ca(2+)-binding residues include Ser-27, Glu-32, Asp-62, Asp-64, Asn-66, Tyr-68, and Glu-73. A disordered region spans residues 94–1118 (YGSRTSSQKE…YVQEQAAYQY (1025 aa)). Residues 100-115 (SQKEHDQEGTRSHKFS) show a composition bias toward basic and acidic residues. Residues 138 to 148 (SEGQHQNVQHD) are compositionally biased toward polar residues. 2 stretches are compositionally biased toward basic and acidic residues: residues 149–164 (QSQRQDKDSERHDTDP) and 172–186 (FHGDSHYGHSERQDT). Positions 237–252 (GQSKTSGQQSSHGQSG) are enriched in low complexity. Residues 259–299 (YSSQTSQQESDSYEQYGSQHQKSGNSQTERQGQNSQYGQTN) show a composition bias toward polar residues. A run of 48 repeats spans residues 273-284 (QYGSQHQKSGNS), 285-296 (QTERQGQNSQYG), 297-308 (QTNKKGHSSYHE), 309-320 (QTEGQGQSFHYG), 321-332 (QKGRKDQSFQQG), 333-344 (QKGRKDQSPHLG), 345-356 (QKGRQDQSPHRG), 357-368 (QKGRQDQSPHQG), 369-380 (QKGRQDQSPHRG), 381-392 (QKGRQDQSPHQG), 393-404 (QKGRQDQSPHLG), 405-416 (QKGRQDQSPHQG), 417-428 (QKGRQDQSPHQG), 429-440 (QKGRQDQSSHQG), 441-452 (QKGRQDQSSHQG), 453-464 (QKGRQDQSSHQG), 465-476 (QKGRQDQSSHQG), 477-488 (QREGQDQNSQWH), 489-500 (RTDSQGQSFHYG), 501-512 (QTGGHSLSSHQG), 513-524 (QTDSQGQNSNWH), 525-536 (RTDSQGQSFHYG), 537-548 (QTGGQGLSSHQG), 549-560 (QTDSQGQNSNWH), 561-572 (RTDSQGQSFHFD), 573-584 (QAGREVQGSHHG), 585-596 (QTDRQSQNSNWH), 597-608 (RTDSQGQSFHFD), 609-620 (QAGKEVQGSHQG), 621-632 (QTDSQGQSSHWH), 633-644 (QTDRQGQSSQQG), 645-656 (HKDRQGQNTHQG), 657-668 (QKGRQDLSPHQG), 669-680 (QKGRQDQSPHLG), 681-692 (QKGRHDQSPHQG), 693-704 (QKGRHDQSPHQG), 705-716 (QKGRQDLSSHQG), 717-728 (QKGRQDQSPHLG), 729-740 (QKGRHDQSPHRG), 741-752 (QKGRQDQSPHQG), 753-764 (QKGRQDQSSHQG), 765-776 (QREGQDQNSHWH), 777-788 (RTDRQGQSFHYG), 789-800 (QTGGQGLSSHQG), 801-812 (QTDSQGQNSQWH), 813-824 (RTDSQGQSFHFD), 825-836 (QAGREGQSSHHG), and 837-848 (QTDRQSQSSHCG). The segment at 273–848 (QYGSQHQKSG…DRQSQSSHCG (576 aa)) is 48 X 12 AA approximate tandem repeats of Q-[KT]-[GD]-[RS]-Q-[DG]-Q-S-[PS]-H-X-G. The interval 321–764 (QKGRKDQSFQ…GRQDQSSHQG (444 aa)) is 22 X 12 AA approximate tandem repeats of Q-K-G-R-Q-D-Q-S-P-H-Q-G. Composition is skewed to basic and acidic residues over residues 347 to 363 (GRQDQSPHRGQKGRQDQ) and 371 to 387 (GRQDQSPHRGQKGRQDQ). A compositionally biased stretch (polar residues) spans 434-466 (DQSSHQGQKGRQDQSSHQGQKGRQDQSSHQGQK). Basic and acidic residues predominate over residues 467–481 (GRQDQSSHQGQREGQ). Composition is skewed to polar residues over residues 482-535 (DQNS…SFHY) and 543-570 (LSSHQGQTDSQGQNSNWHRTDSQGQSFH). 2 stretches are compositionally biased toward polar residues: residues 587 to 606 (DRQSQNSNWHRTDSQGQSFH) and 616 to 643 (GSHQGQTDSQGQSSHWHQTDRQGQSSQQ). Residues 710 to 726 (DLSSHQGQKGRQDQSPH) show a composition bias toward polar residues. Basic and acidic residues-rich tracts occupy residues 731–747 (GRHDQSPHRGQKGRQDQ) and 755–769 (GRQDQSSHQGQREGQ). Polar residues-rich tracts occupy residues 795 to 822 (LSSHQGQTDSQGQNSQWHRTDSQGQSFH), 833 to 848 (SHHGQTDRQSQSSHCG), and 855 to 864 (TENQGQNRHS). Residues 865–875 (LGTDRTRRDSY) show a composition bias toward basic and acidic residues. The span at 876–889 (VEQSGRSVKLSQQN) shows a compositional bias: polar residues. Composition is skewed to basic and acidic residues over residues 890-908 (SREEVRQTQSQRSHDRREQ), 947-965 (EQDHCGEEEYQDWDRHSVE), 978-998 (THEEEQSHQTSDRQTHVDEQN), 1005-1045 (QTHE…KEKY), and 1056-1065 (PNREKSHMSE).

Belongs to the S100-fused protein family. Potential substrate of transglutaminase. Some arginines are probably converted to citrullines by peptidylarginine deimidase. Detectable in the stratified internal epithelia of forestomach and tongue and to a lesser degree in normal skin epidermis, where it is restricted to the differentiated suprabasal cell layers. Overexpressed in skin tumors.

Its subcellular location is the secreted. The protein resides in the extracellular space. It localises to the extracellular matrix. Functionally, involved in the cornified cell envelope formation. Multifunctional epidermal matrix protein. The chain is Repetin (Rptn) from Mus musculus (Mouse).